We begin with the raw amino-acid sequence, 409 residues long: Ubiquitin-associated domain-containing protein 1 (409 aa).

At Met-1 the chain carries N-acetylmethionine. Positions Leu-14–Ser-98 constitute a Ubiquitin-like domain. Residues Pro-101–Asp-122 form a disordered region. The span at Ala-108–Asp-122 shows a compositional bias: basic and acidic residues. The 45-residue stretch at Asp-187–His-231 folds into the UBA 1 domain. Residues Thr-239–Glu-273 form a disordered region. The span at Ala-245–Ser-268 shows a compositional bias: low complexity. The UBA 2 domain occupies Arg-292–Asp-332. The 40-residue stretch at Asn-357–Met-396 folds into the STI1 domain.

In terms of assembly, component of the KPC complex composed of RNF123/KPC1 and UBAC1/KPC2. Interacts (via ubiquitin-like domain) with RNF123. Interacts (via ubiquitin-like and UBA domains) with the proteasome via its N-terminal domain.

Its subcellular location is the cytoplasm. It functions in the pathway protein modification; protein ubiquitination. Its function is as follows. Non-catalytic component of the KPC complex, a E3 ubiquitin-protein ligase complex that mediates polyubiquitination of target proteins, such as CDKN1B and NFKB1. The KPC complex catalyzes polyubiquitination and proteasome-mediated degradation of CDKN1B during G1 phase of the cell cycle. The KPC complex also acts as a key regulator of the NF-kappa-B signaling by promoting maturation of the NFKB1 component of NF-kappa-B by catalyzing ubiquitination of the NFKB1 p105 precursor. Within the KPC complex, UBAC1 acts as an adapter that promotes the transfer of target proteins that have been polyubiquitinated by RNF123/KPC1 to the 26S proteasome. The protein is Ubiquitin-associated domain-containing protein 1 (Ubac1) of Mus musculus (Mouse).